The primary structure comprises 404 residues: Acetate kinase (404 aa).

Residue N7 coordinates Mg(2+). K14 provides a ligand contact to ATP. R95 contributes to the substrate binding site. D152 functions as the Proton donor/acceptor in the catalytic mechanism. ATP is bound by residues H212–G216, D286–R288, and G334–N338. E388 contacts Mg(2+).

It belongs to the acetokinase family. In terms of assembly, homodimer. Mg(2+) serves as cofactor. The cofactor is Mn(2+).

Its subcellular location is the cytoplasm. It catalyses the reaction acetate + ATP = acetyl phosphate + ADP. It participates in metabolic intermediate biosynthesis; acetyl-CoA biosynthesis; acetyl-CoA from acetate: step 1/2. In terms of biological role, catalyzes the formation of acetyl phosphate from acetate and ATP. Can also catalyze the reverse reaction. This Nitratidesulfovibrio vulgaris (strain DSM 19637 / Miyazaki F) (Desulfovibrio vulgaris) protein is Acetate kinase.